Consider the following 787-residue polypeptide: Endonuclease MutS2 (787 aa).

336-343 serves as a coordination point for ATP; sequence GPNTGGKT. In terms of domain architecture, Smr spans 712-787; sequence LDLRGVRYED…GNGATEVQFK (76 aa).

Belongs to the DNA mismatch repair MutS family. MutS2 subfamily. Homodimer. Binds to stalled ribosomes, contacting rRNA.

Its function is as follows. Endonuclease that is involved in the suppression of homologous recombination and thus may have a key role in the control of bacterial genetic diversity. In terms of biological role, acts as a ribosome collision sensor, splitting the ribosome into its 2 subunits. Detects stalled/collided 70S ribosomes which it binds and splits by an ATP-hydrolysis driven conformational change. Acts upstream of the ribosome quality control system (RQC), a ribosome-associated complex that mediates the extraction of incompletely synthesized nascent chains from stalled ribosomes and their subsequent degradation. Probably generates substrates for RQC. The sequence is that of Endonuclease MutS2 from Lactiplantibacillus plantarum (strain ATCC BAA-793 / NCIMB 8826 / WCFS1) (Lactobacillus plantarum).